The following is a 235-amino-acid chain: tRNA pseudouridine synthase B (235 aa).

Asp45 (nucleophile) is an active-site residue.

It belongs to the pseudouridine synthase TruB family. Type 1 subfamily.

The catalysed reaction is uridine(55) in tRNA = pseudouridine(55) in tRNA. Functionally, responsible for synthesis of pseudouridine from uracil-55 in the psi GC loop of transfer RNAs. In Chlamydia abortus (strain DSM 27085 / S26/3) (Chlamydophila abortus), this protein is tRNA pseudouridine synthase B.